The sequence spans 153 residues: Small ribosomal subunit protein uS13 (153 aa).

The protein belongs to the universal ribosomal protein uS13 family.

Its subcellular location is the cytoplasm. Its function is as follows. Located at the top of the head of the 40S subunit, it contacts several helices of the 18S rRNA. This is Small ribosomal subunit protein uS13 (RPS18) from Chlamydomonas reinhardtii (Chlamydomonas smithii).